Reading from the N-terminus, the 620-residue chain is 1-deoxy-D-xylulose-5-phosphate synthase (620 aa).

Thiamine diphosphate is bound by residues H80 and 121–123 (GHS). Residue D152 participates in Mg(2+) binding. Thiamine diphosphate-binding positions include 153-154 (GA), N181, Y288, and E370. N181 is a binding site for Mg(2+).

The protein belongs to the transketolase family. DXPS subfamily. Homodimer. Mg(2+) is required as a cofactor. The cofactor is thiamine diphosphate.

It carries out the reaction D-glyceraldehyde 3-phosphate + pyruvate + H(+) = 1-deoxy-D-xylulose 5-phosphate + CO2. Its pathway is metabolic intermediate biosynthesis; 1-deoxy-D-xylulose 5-phosphate biosynthesis; 1-deoxy-D-xylulose 5-phosphate from D-glyceraldehyde 3-phosphate and pyruvate: step 1/1. Functionally, catalyzes the acyloin condensation reaction between C atoms 2 and 3 of pyruvate and glyceraldehyde 3-phosphate to yield 1-deoxy-D-xylulose-5-phosphate (DXP). The polypeptide is 1-deoxy-D-xylulose-5-phosphate synthase (Shigella flexneri).